A 362-amino-acid polypeptide reads, in one-letter code: MSQNSLRLVEDKSVDKSKALEAALSQIERSFGKGSIMKLGSNENVVEIETVSTGSLGLDIALGIGGLPKGRIIEIYGPESSGKTTLALQTIAESQKKGGICAFVDAEHALDPVYARKLGVDLQNLLISQPDTGEQALEITDTLVRSGAVDVLVVDSVAALTPRAEIEGEMGDSLPGMQARLMSQALRKLTASISKSNCMVIFINQIRMKIGVMFGSPETTTGGNALKFYASVRLDIRRIGSVKEREEVVGNQTRVKVVKNKMAPPFKQVEFDIMYGEGVSKTGELVDLGVKAGIVEKSGAWFSYNSQRLGQGRENAKTFLRDNPDLAREIELALRQNAGLIADRFLQNGGPDADDGDAAAEM.

Residue 77–84 coordinates ATP; it reads GPESSGKT.

Belongs to the RecA family.

It localises to the cytoplasm. In terms of biological role, can catalyze the hydrolysis of ATP in the presence of single-stranded DNA, the ATP-dependent uptake of single-stranded DNA by duplex DNA, and the ATP-dependent hybridization of homologous single-stranded DNAs. It interacts with LexA causing its activation and leading to its autocatalytic cleavage. This chain is Protein RecA, found in Rhizobium etli (strain ATCC 51251 / DSM 11541 / JCM 21823 / NBRC 15573 / CFN 42).